Consider the following 28-residue polypeptide: Nicotinic acetylcholine receptor-binding protein Mnn-3C (28 aa).

C3 and C24 form a disulfide bridge.

It belongs to the three-finger toxin family. Short-chain subfamily. In terms of tissue distribution, expressed by the venom gland.

The protein resides in the secreted. In terms of biological role, binds and may inhibit nicotinic acetylcholine receptors (nAChR). The sequence is that of Nicotinic acetylcholine receptor-binding protein Mnn-3C from Micrurus nigrocinctus (Central American coral snake).